Here is an 862-residue protein sequence, read N- to C-terminus: Eukaryotic translation initiation factor 3 subunit C (862 aa).

A disordered region spans residues 1–81; that stretch reads MSSRFFYGGG…EEEEKVTVVK (81 aa). The span at 17 to 54 shows a compositional bias: acidic residues; sequence SSDEEELYSDREEEEKSEEEESSEEEDETSEEEESDEE. A compositionally biased stretch (basic and acidic residues) spans 55 to 65; the sequence is TGAKKFLKDVA. Positions 66-75 are enriched in acidic residues; it reads SDSEEEEEEE. Residues 600 to 774 enclose the PCI domain; it reads FHMHINLELL…NAIVFRKGVE (175 aa). A disordered region spans residues 813–862; the sequence is RDQGAGARGGRGSGRGGQARGGPRFPGGQQGRRPGGQQFGGGALGGAIKA. The segment covering 818–862 has biased composition (gly residues); it reads GARGGRGSGRGGQARGGPRFPGGQQGRRPGGQQFGGGALGGAIKA.

This sequence belongs to the eIF-3 subunit C family. Component of the eukaryotic translation initiation factor 3 (eIF-3) complex.

The protein localises to the cytoplasm. In terms of biological role, component of the eukaryotic translation initiation factor 3 (eIF-3) complex, which is involved in protein synthesis of a specialized repertoire of mRNAs and, together with other initiation factors, stimulates binding of mRNA and methionyl-tRNAi to the 40S ribosome. The eIF-3 complex specifically targets and initiates translation of a subset of mRNAs involved in cell proliferation. This is Eukaryotic translation initiation factor 3 subunit C (nip1) from Neosartorya fischeri (strain ATCC 1020 / DSM 3700 / CBS 544.65 / FGSC A1164 / JCM 1740 / NRRL 181 / WB 181) (Aspergillus fischerianus).